Here is a 166-residue protein sequence, read N- to C-terminus: Sec-independent protein translocase protein TatB (166 aa).

Residues 2-22 (FDGIGFMELLLIGVLGLVVLG) traverse the membrane as a helical segment. The disordered stretch occupies residues 69 to 166 (SKGLSNLSPE…DTRSNPKANG (98 aa)). Composition is skewed to polar residues over residues 88–97 (QAAQSVNRPY) and 112–132 (QIHS…SQAN). Residues 133–153 (PTATVEASPTSASPATPSEPS) show a composition bias toward low complexity. Residues 155–166 (GADTRSNPKANG) are compositionally biased toward polar residues.

The protein belongs to the TatB family. The Tat system comprises two distinct complexes: a TatABC complex, containing multiple copies of TatA, TatB and TatC subunits, and a separate TatA complex, containing only TatA subunits. Substrates initially bind to the TatABC complex, which probably triggers association of the separate TatA complex to form the active translocon.

The protein resides in the cell inner membrane. In terms of biological role, part of the twin-arginine translocation (Tat) system that transports large folded proteins containing a characteristic twin-arginine motif in their signal peptide across membranes. Together with TatC, TatB is part of a receptor directly interacting with Tat signal peptides. TatB may form an oligomeric binding site that transiently accommodates folded Tat precursor proteins before their translocation. This chain is Sec-independent protein translocase protein TatB, found in Shewanella baltica (strain OS223).